Here is a 305-residue protein sequence, read N- to C-terminus: MENSQLCKLFIGGLNVQTSESGLRGHFEAFGTLTDCVVVVNPQTKRSRCFGFVTYSNVEEADAAMAASPHAVDGNTVELKRAVSREDSARPGAHAKVKKLFVGGLKGDVAEGDLIEHFSQFGAVEKAEIIADKQSGKKRGFGFVYFQSHDAADKAAVVKFHPIQGHRVEVKKAVPKEDIHAGGGGARAARGGRGGGRGRGGGGGGGGRDQNGLAKGGGGGGGGYNSYGGYGGYGAYGGGGGGGGSYGGSDYGNGFGGFGSYSQHQSSYGPMKSGGGGGGGGSWGGRSNSGPYRGGYGGGYGGGSF.

M1 is subject to N-acetylmethionine. The RRM 1 domain maps to 7–86 (CKLFIGGLNV…VELKRAVSRE (80 aa)). S68 bears the Phosphoserine mark. K80 participates in a covalent cross-link: Glycyl lysine isopeptide (Lys-Gly) (interchain with G-Cter in SUMO2). S84 is subject to Phosphoserine; by MAPKAPK2. Residues K96, K98, K99, and K106 each participate in a glycyl lysine isopeptide (Lys-Gly) (interchain with G-Cter in SUMO2) cross-link. Residues 98 to 175 (KKLFVGGLKG…HRVEVKKAVP (78 aa)) enclose the RRM 2 domain. K133 bears the N6-acetyllysine mark. R139 bears the Omega-N-methylarginine mark. Residues K154, K159, K172, and K176 each participate in a glycyl lysine isopeptide (Lys-Gly) (interchain with G-Cter in SUMO2) cross-link. Disordered regions lie at residues 178 to 211 (DIHA…RDQN) and 265 to 305 (QSSY…GGSF). Composition is skewed to gly residues over residues 181–211 (AGGG…RDQN) and 272–284 (KSGG…GSWG). R286 is subject to Omega-N-methylarginine. A compositionally biased stretch (gly residues) spans 292-305 (YRGGYGGGYGGGSF). R293 carries the asymmetric dimethylarginine; alternate modification. A Dimethylated arginine; alternate modification is found at R293. Position 293 is an omega-N-methylarginine; alternate (R293).

In terms of processing, phosphorylated at Ser-84 by MAPKAPK2 in response to LPS treatment, promoting stabilization of GADD45A mRNA. Post-translationally, arg-293 is dimethylated, probably to asymmetric dimethylarginine.

Its subcellular location is the nucleus. In terms of biological role, mRNA-binding component of ribonucleosomes. Specifically binds AU-rich element (ARE)-containing mRNAs. Involved in post-transcriptional regulation of cytokines mRNAs. This Mus musculus (Mouse) protein is Heterogeneous nuclear ribonucleoprotein A0 (Hnrnpa0).